Here is a 221-residue protein sequence, read N- to C-terminus: Fanconi anemia core complex-associated protein 24 (221 aa).

In terms of assembly, belongs to the multisubunit FA complex composed of FANCA, FANCB, FANCC, FANCE, FANCF, FANCG, FANCL/PHF9, FANCM and FAAP24. Interacts with FANCM.

The protein localises to the nucleus. Its function is as follows. Plays a role in DNA repair through recruitment of the FA core complex to damaged DNA. Regulates FANCD2 monoubiquitination upon DNA damage. Induces chromosomal instability as well as hypersensitivity to DNA cross-linking agents, when repressed. Targets FANCM/FAAP24 complex to the DNA, preferentially to single strand DNA. In Mus musculus (Mouse), this protein is Fanconi anemia core complex-associated protein 24.